Reading from the N-terminus, the 675-residue chain is Vitamin K-dependent protein S (675 aa).

An N-terminal signal peptide occupies residues 1–24 (MRVLSARFRVLLACLALVIPVSET). Residues 25–41 (NFLSKERASQVLVRKRR) constitute a propeptide that is removed on maturation. Residues 42 to 87 (ANTLFEETMKGNLERECIEELCNKEEAREVFENNPETDYFYPKYLG) form the Gla domain. Glu47, Glu48, Glu55, Glu57, Glu60, Glu61, Glu66, Glu67, Glu70, Glu73, and Glu77 each carry 4-carboxyglutamate. Residues Cys58 and Cys63 are joined by a disulfide bond. A thrombin-sensitive region spans residues 88–116 (CLGAFRVGSFHAARQSANAYPDLRSCVKA). In terms of domain architecture, EGF-like 1 spans 117–155 (ISDQCDPIPCNEDGYLACQDGQAAFTCFCKPGWQGDRCQ). Disulfide bonds link Cys121/Cys134, Cys126/Cys143, Cys145/Cys154, Cys161/Cys175, Cys171/Cys184, Cys186/Cys199, Cys205/Cys217, Cys212/Cys226, Cys228/Cys241, Cys247/Cys256, Cys252/Cys265, Cys267/Cys282, and Cys449/Cys475. Asp136 carries the post-translational modification (3R)-3-hydroxyaspartate. Positions 157–200 (DVNECKDPSNVNGGCSQICDNTPGSYHCSCKRGFAMLPNKKDCK) constitute an EGF-like 2; calcium-binding domain. Residues 201–242 (DLDECALKPSVCGTAVCKNIPGDFECECPDGYRYDPSSKSCK) form the EGF-like 3; calcium-binding domain. Residues 243-283 (DVDECSENMCAQLCVNFPGGYSCYCDGKKGFKLAQDQKSCE) enclose the EGF-like 4; calcium-binding domain. Laminin G-like domains lie at 299–475 (LLYL…NKHC) and 484–665 (YYPG…AHSC). 2 N-linked (GlcNAc...) asparagine glycosylation sites follow: Asn499 and Asn509. A disulfide bridge links Cys638 with Cys665.

The iron and 2-oxoglutarate dependent 3-hydroxylation of aspartate and asparagine is (R) stereospecific within EGF domains. Plasma.

Its subcellular location is the secreted. Functionally, anticoagulant plasma protein; it is a cofactor to activated protein C in the degradation of coagulation factors Va and VIIIa. It helps to prevent coagulation and stimulating fibrinolysis. This Mus musculus (Mouse) protein is Vitamin K-dependent protein S (Pros1).